Reading from the N-terminus, the 266-residue chain is Putative pyruvate, phosphate dikinase regulatory protein (266 aa).

Position 147–154 (147–154 (GLSRTSKT)) interacts with ADP.

Belongs to the pyruvate, phosphate/water dikinase regulatory protein family. PDRP subfamily.

It catalyses the reaction N(tele)-phospho-L-histidyl/L-threonyl-[pyruvate, phosphate dikinase] + ADP = N(tele)-phospho-L-histidyl/O-phospho-L-threonyl-[pyruvate, phosphate dikinase] + AMP + H(+). The catalysed reaction is N(tele)-phospho-L-histidyl/O-phospho-L-threonyl-[pyruvate, phosphate dikinase] + phosphate + H(+) = N(tele)-phospho-L-histidyl/L-threonyl-[pyruvate, phosphate dikinase] + diphosphate. Functionally, bifunctional serine/threonine kinase and phosphorylase involved in the regulation of the pyruvate, phosphate dikinase (PPDK) by catalyzing its phosphorylation/dephosphorylation. The sequence is that of Putative pyruvate, phosphate dikinase regulatory protein from Clostridium perfringens (strain 13 / Type A).